A 1165-amino-acid polypeptide reads, in one-letter code: DNA-directed RNA polymerase subunit beta (1165 aa).

It belongs to the RNA polymerase beta chain family. In terms of assembly, the RNAP catalytic core consists of 2 alpha, 1 beta, 1 beta' and 1 omega subunit. When a sigma factor is associated with the core the holoenzyme is formed, which can initiate transcription.

The enzyme catalyses RNA(n) + a ribonucleoside 5'-triphosphate = RNA(n+1) + diphosphate. Functionally, DNA-dependent RNA polymerase catalyzes the transcription of DNA into RNA using the four ribonucleoside triphosphates as substrates. This chain is DNA-directed RNA polymerase subunit beta, found in Corynebacterium glutamicum (strain ATCC 13032 / DSM 20300 / JCM 1318 / BCRC 11384 / CCUG 27702 / LMG 3730 / NBRC 12168 / NCIMB 10025 / NRRL B-2784 / 534).